The primary structure comprises 254 residues: Alcohol dehydrogenase (254 aa).

NAD(+) is bound at residue 10 to 33 (FVAGLGGIGLDTSRELVKRDLKNL). A substrate-binding site is contributed by Ser-138. Tyr-151 serves as the catalytic Proton acceptor.

Belongs to the short-chain dehydrogenases/reductases (SDR) family. Homodimer.

The catalysed reaction is a primary alcohol + NAD(+) = an aldehyde + NADH + H(+). It carries out the reaction a secondary alcohol + NAD(+) = a ketone + NADH + H(+). The chain is Alcohol dehydrogenase (Adh) from Drosophila guanche (Fruit fly).